Consider the following 621-residue polypeptide: Bifunctional 3'-phosphoadenosine 5'-phosphosulfate synthase 2 (621 aa).

Residues 1–216 (MSANFKMNHK…VVELLQEQNI (216 aa)) form an adenylyl-sulfate kinase region. Residue 53-58 (GAGKTT) coordinates ATP. Residues 80–83 (DNVR), phenylalanine 92, 97–100 (REEN), 123–124 (IS), lysine 162, and 175–176 (GF) each bind adenosine 5'-phosphosulfate. Residues serine 198, 415–418 (QLRN), 517–521 (GRDPA), and alanine 559 contribute to the ATP site. The interval 225–621 (IHELFVPENK…DYYRSLEKTN (397 aa)) is sulfate adenylyltransferase.

The protein in the N-terminal section; belongs to the APS kinase family. In the C-terminal section; belongs to the sulfate adenylyltransferase family. Expressed in liver, cartilage, skin and brain.

The catalysed reaction is sulfate + ATP + H(+) = adenosine 5'-phosphosulfate + diphosphate. The enzyme catalyses adenosine 5'-phosphosulfate + ATP = 3'-phosphoadenylyl sulfate + ADP + H(+). It participates in sulfur metabolism; sulfate assimilation. Functionally, bifunctional enzyme with both ATP sulfurylase and APS kinase activity, which mediates two steps in the sulfate activation pathway. The first step is the transfer of a sulfate group to ATP to yield adenosine 5'-phosphosulfate (APS), and the second step is the transfer of a phosphate group from ATP to APS yielding 3'-phosphoadenylylsulfate/PAPS, the activated sulfate donor used by sulfotransferases. In mammals, PAPS is the sole source of sulfate while APS appears to only be an intermediate in the sulfate-activation pathway. May have an important role in skeletogenesis during postnatal growth. The chain is Bifunctional 3'-phosphoadenosine 5'-phosphosulfate synthase 2 (Papss2) from Mus musculus (Mouse).